A 258-amino-acid polypeptide reads, in one-letter code: Indole-3-glycerol phosphate synthase (258 aa).

It belongs to the TrpC family.

It catalyses the reaction 1-(2-carboxyphenylamino)-1-deoxy-D-ribulose 5-phosphate + H(+) = (1S,2R)-1-C-(indol-3-yl)glycerol 3-phosphate + CO2 + H2O. It functions in the pathway amino-acid biosynthesis; L-tryptophan biosynthesis; L-tryptophan from chorismate: step 4/5. This chain is Indole-3-glycerol phosphate synthase, found in Chlorobium phaeovibrioides (strain DSM 265 / 1930) (Prosthecochloris vibrioformis (strain DSM 265)).